The primary structure comprises 221 residues: Probable N-acetyl-alpha-D-glucosaminyl L-malate deacetylase 2 (221 aa).

Positions 11, 14, and 125 each coordinate Zn(2+).

This sequence belongs to the PIGL family. It depends on Zn(2+) as a cofactor.

The catalysed reaction is (S)-malyl N-acetyl-alpha-D-glucosaminide + H2O = (S)-malyl alpha-D-glucosaminide + acetate. Involved in bacillithiol (BSH) biosynthesis. Catalyzes the second step of the pathway, the deacetylation of N-acetylglucosaminylmalate (GlcNAc-Mal) to glucosamine malate (GlcN-Mal). The sequence is that of Probable N-acetyl-alpha-D-glucosaminyl L-malate deacetylase 2 from Bacillus subtilis (strain 168).